The chain runs to 570 residues: Protein HEATR9 (570 aa).

This chain is Protein HEATR9 (HEATR9), found in Homo sapiens (Human).